The primary structure comprises 77 residues: uncharacterized protein (77 aa).

Disordered stretches follow at residues 1–34 (MSRA…TKMN) and 56–77 (LDGD…FSGR). Residues 8-20 (DNDKGWAKKKGAD) show a composition bias toward basic and acidic residues. Positions 25-34 (PRPHKQTKMN) are enriched in basic residues. The span at 56–70 (LDGDIRRGGNKKSER) shows a compositional bias: basic and acidic residues.

This is an uncharacterized protein from Dictyostelium discoideum (Social amoeba).